The primary structure comprises 386 residues: Succinate--CoA ligase [ADP-forming] subunit beta (386 aa).

The 236-residue stretch at lysine 9–glutamate 244 folds into the ATP-grasp domain. ATP is bound by residues lysine 46, glycine 53 to glycine 55, glutamate 99, alanine 102, and glutamate 107. Mg(2+) contacts are provided by asparagine 199 and aspartate 213. Substrate-binding positions include asparagine 264 and glycine 321–methionine 323.

The protein belongs to the succinate/malate CoA ligase beta subunit family. In terms of assembly, heterotetramer of two alpha and two beta subunits. The cofactor is Mg(2+).

The enzyme catalyses succinate + ATP + CoA = succinyl-CoA + ADP + phosphate. The catalysed reaction is GTP + succinate + CoA = succinyl-CoA + GDP + phosphate. It functions in the pathway carbohydrate metabolism; tricarboxylic acid cycle; succinate from succinyl-CoA (ligase route): step 1/1. Its function is as follows. Succinyl-CoA synthetase functions in the citric acid cycle (TCA), coupling the hydrolysis of succinyl-CoA to the synthesis of either ATP or GTP and thus represents the only step of substrate-level phosphorylation in the TCA. The beta subunit provides nucleotide specificity of the enzyme and binds the substrate succinate, while the binding sites for coenzyme A and phosphate are found in the alpha subunit. The polypeptide is Succinate--CoA ligase [ADP-forming] subunit beta (Polaromonas sp. (strain JS666 / ATCC BAA-500)).